An 83-amino-acid chain; its full sequence is Small ribosomal subunit protein bS20 (83 aa).

It belongs to the bacterial ribosomal protein bS20 family.

Its function is as follows. Binds directly to 16S ribosomal RNA. This chain is Small ribosomal subunit protein bS20, found in Flavobacterium psychrophilum (strain ATCC 49511 / DSM 21280 / CIP 103535 / JIP02/86).